The following is a 94-amino-acid chain: Co-chaperonin GroES (94 aa).

It belongs to the GroES chaperonin family. In terms of assembly, heptamer of 7 subunits arranged in a ring. Interacts with the chaperonin GroEL.

Its subcellular location is the cytoplasm. Its function is as follows. Together with the chaperonin GroEL, plays an essential role in assisting protein folding. The GroEL-GroES system forms a nano-cage that allows encapsulation of the non-native substrate proteins and provides a physical environment optimized to promote and accelerate protein folding. GroES binds to the apical surface of the GroEL ring, thereby capping the opening of the GroEL channel. This chain is Co-chaperonin GroES, found in Acetivibrio thermocellus (strain ATCC 27405 / DSM 1237 / JCM 9322 / NBRC 103400 / NCIMB 10682 / NRRL B-4536 / VPI 7372) (Clostridium thermocellum).